Reading from the N-terminus, the 451-residue chain is MKQDKMAEVQSHACNQKARVYLETYGCQMNFSDTEIISSILSDAGYAIAESEQVADIIFLNTCAVRENAEQRIRNRLQNLRPLKKQNPKLIVGVLGCMAERLREKLFQEEKIVDLIAGPDAYRTLPNLLDLAESGEKAANVMLSLEETYADINPLRKNGHSAFLAIMRGCDNMCAFCIVPYTRGRERSRPMTSILDELKQLSDEGTREVTLLGQNVNSYYDENSGTRFANLMDKASLVNPNMRIRFTTSHPKDISSELIDVIAERKNLCEFIHLPVQSGSSRMLELMNRGHTREDYLEKIALIKSKIPNCSISTDMISGFCTETEADHAATLSLLREVRYDYAFTFVYSVRPNTPAATRLNDDVPDDVKQRRLSEVIALQQKISAELYRNDIGNTHEVLIEGESKRSSDMWMGRARNNRVVVFPKNGAQVGDFVNVKITDATSATLIGNAL.

Positions 18–134 constitute an MTTase N-terminal domain; it reads ARVYLETYGC…LPNLLDLAES (117 aa). Positions 27, 63, 97, 170, 174, and 177 each coordinate [4Fe-4S] cluster. Positions 156-386 constitute a Radical SAM core domain; the sequence is RKNGHSAFLA…IALQQKISAE (231 aa). A TRAM domain is found at 389-451; it reads RNDIGNTHEV…TSATLIGNAL (63 aa).

The protein belongs to the methylthiotransferase family. MiaB subfamily. In terms of assembly, monomer. [4Fe-4S] cluster is required as a cofactor.

It is found in the cytoplasm. It carries out the reaction N(6)-dimethylallyladenosine(37) in tRNA + (sulfur carrier)-SH + AH2 + 2 S-adenosyl-L-methionine = 2-methylsulfanyl-N(6)-dimethylallyladenosine(37) in tRNA + (sulfur carrier)-H + 5'-deoxyadenosine + L-methionine + A + S-adenosyl-L-homocysteine + 2 H(+). Functionally, catalyzes the methylthiolation of N6-(dimethylallyl)adenosine (i(6)A), leading to the formation of 2-methylthio-N6-(dimethylallyl)adenosine (ms(2)i(6)A) at position 37 in tRNAs that read codons beginning with uridine. This chain is tRNA-2-methylthio-N(6)-dimethylallyladenosine synthase, found in Chloroherpeton thalassium (strain ATCC 35110 / GB-78).